The primary structure comprises 1119 residues: Period circadian protein homolog 3 (1119 aa).

The tract at residues 1-48 is disordered; the sequence is MDPCGNPAVPGGDCPQTRGPGLQGSSGQEGPLQGICVDSSHSEHEDRN. A Nuclear export signal 1 motif is present at residues 54–63; sequence LIMVVQEMKK. PAS domains are found at residues 120–187 and 259–325; these read LASE…PTQL and YEAP…KVLK. The 44-residue stretch at 334–377 folds into the PAC domain; sequence HSPIRFCTQNGDYVILDSSWSSFVNPWSRKVSFIIGRHKVRTSP. Positions 400 to 409 match the Nuclear export signal 3 motif; sequence LQEQIHRLLL. Over residues 419 to 428 the composition is skewed to low complexity; sequence GYGSLGSSGS. Disordered regions lie at residues 419 to 449, 483 to 530, 718 to 744, and 878 to 910; these read GYGS…VEEA, VKPV…SSSY, HSRC…SSSS, and LEPT…SRSS. Composition is skewed to polar residues over residues 429-442 and 491-515; these read QEQH…SESS and TEPQ…STDT. The segment at 551–750 is CSNK1E binding domain; sequence LKRKCISCTN…SSSSAHLCPH (200 aa). The Nuclear localization signal motif lies at 720–739; sequence RCAGSERRKHKRKKLPTPVD. A compositionally biased stretch (basic and acidic residues) spans 885–903; it reads HGPRRVEENWETHSEEEHP. Serine 907 is modified (phosphoserine). Positions 913 to 920 match the Nuclear export signal 2 motif; the sequence is LQLNLLQE. The disordered stretch occupies residues 947–1011; the sequence is GNSGSRSPPC…QDTHRDRAFS (65 aa). Positions 970–988 are enriched in low complexity; the sequence is SPSAAASGSSASSVHGSGS. Positions 989–1001 are enriched in polar residues; that stretch reads DYTSEVSENGQRS. The interval 1037 to 1119 is CRY binding domain; sequence ERGRDTVLRE…VQQKTPVEQL (83 aa).

As to quaternary structure, homodimer. Component of the circadian core oscillator, which includes the CRY proteins, CLOCK or NPAS2, BMAL1 or BMAL2, CSNK1D and/or CSNK1E, TIMELESS and the PER proteins. Interacts directly with PER1, PER2, CRY1, CRY2, and TIMELESS; interaction with CRY1 and CRY2 is weak and not rhythmic. Interacts with FBXW11 and BTRC. In terms of processing, phosphorylation by CSNK1E is weak and appears to require association with PER1 and translocation to the nucleus. Post-translationally, ubiquitinated.

The protein localises to the cytoplasm. The protein resides in the nucleus. Its function is as follows. Originally described as a core component of the circadian clock. The circadian clock, an internal time-keeping system, regulates various physiological processes through the generation of approximately 24 hour circadian rhythms in gene expression, which are translated into rhythms in metabolism and behavior. It is derived from the Latin roots 'circa' (about) and 'diem' (day) and acts as an important regulator of a wide array of physiological functions including metabolism, sleep, body temperature, blood pressure, endocrine, immune, cardiovascular, and renal function. Consists of two major components: the central clock, residing in the suprachiasmatic nucleus (SCN) of the brain, and the peripheral clocks that are present in nearly every tissue and organ system. Both the central and peripheral clocks can be reset by environmental cues, also known as Zeitgebers (German for 'timegivers'). The predominant Zeitgeber for the central clock is light, which is sensed by retina and signals directly to the SCN. The central clock entrains the peripheral clocks through neuronal and hormonal signals, body temperature and feeding-related cues, aligning all clocks with the external light/dark cycle. Circadian rhythms allow an organism to achieve temporal homeostasis with its environment at the molecular level by regulating gene expression to create a peak of protein expression once every 24 hours to control when a particular physiological process is most active with respect to the solar day. Transcription and translation of core clock components (CLOCK, NPAS2, BMAL1, BMAL2, PER1, PER2, PER3, CRY1 and CRY2) plays a critical role in rhythm generation, whereas delays imposed by post-translational modifications (PTMs) are important for determining the period (tau) of the rhythms (tau refers to the period of a rhythm and is the length, in time, of one complete cycle). A diurnal rhythm is synchronized with the day/night cycle, while the ultradian and infradian rhythms have a period shorter and longer than 24 hours, respectively. Disruptions in the circadian rhythms contribute to the pathology of cardiovascular diseases, cancer, metabolic syndromes and aging. A transcription/translation feedback loop (TTFL) forms the core of the molecular circadian clock mechanism. Transcription factors, CLOCK or NPAS2 and BMAL1 or BMAL2, form the positive limb of the feedback loop, act in the form of a heterodimer and activate the transcription of core clock genes and clock-controlled genes (involved in key metabolic processes), harboring E-box elements (5'-CACGTG-3') within their promoters. The core clock genes: PER1/2/3 and CRY1/2 which are transcriptional repressors form the negative limb of the feedback loop and interact with the CLOCK|NPAS2-BMAL1|BMAL2 heterodimer inhibiting its activity and thereby negatively regulating their own expression. This heterodimer also activates nuclear receptors NR1D1, NR1D2, RORA, RORB and RORG, which form a second feedback loop and which activate and repress BMAL1 transcription, respectively. Has a redundant role with the other PER proteins PER1 and PER2 and is not essential for the circadian rhythms maintenance. In contrast, plays an important role in sleep-wake timing and sleep homeostasis probably through the transcriptional regulation of sleep homeostasis-related genes, without influencing circadian parameters. Can bind heme. The chain is Period circadian protein homolog 3 (Per3) from Rattus norvegicus (Rat).